A 520-amino-acid chain; its full sequence is Phospholipase C A (520 aa).

The tat-type signal signal peptide spans 1–38; the sequence is MSASPLLGMSRREFLTKLTGAGAAAFLMDWAAPVIEKA.

It belongs to the bacterial phospholipase C family. Predicted to be exported by the Tat system. The position of the signal peptide cleavage has not been experimentally proven.

Its subcellular location is the secreted. It is found in the cell wall. It carries out the reaction a 1,2-diacyl-sn-glycero-3-phosphocholine + H2O = phosphocholine + a 1,2-diacyl-sn-glycerol + H(+). Involved in virulence. Induces cytotoxic effects on mouse macrophage cell lines, via direct or indirect enzymatic hydrolysis of cell membrane phospholipids. Hydrolyzes phosphatidylcholine. The polypeptide is Phospholipase C A (Mycobacterium tuberculosis (strain CDC 1551 / Oshkosh)).